The following is a 463-amino-acid chain: MATVTATTKVPEIRDVTRIERIGAHSHIRGLGLDDALEPRQASQGMVGQLAARRAAGVVLEMIREGKIAGRAVLIAGQPGTGKTAIAMGMAQALGPDTPFTAIAGSEIFSLEMSKTEALTQAFRRSIGVRIKEETEIIEGEVVEIQIDRPATGTGSKVGKLTLKTTEMETIYDLGTKMIESLTKDKVQAGDVITIDKATGKISKLGRSFTRARDYDAMGSQTKFVQCPDGELQKRKEVVHTVSLHEIDVINSRTQGFLALFSGDTGEIKSEVREQINAKVAEWREEGKAEIIPGVLFIDEVHMLDIESFSFLNRALESDMAPVLIMATNRGITRIRGTSYQSPHGIPIDLLDRLLIVSTTPYSEKDTKQILRIRCEEEDVEMSEDAYTVLTRIGLETSLRYAIQLITAASLVCRKRKGTEVQVDDIKRVYSLFLDESRSTQYMKEYQDAFLFNELKGETMDTS.

The residue at position 2 (Ala2) is an N-acetylalanine. Lys9 is covalently cross-linked (Glycyl lysine isopeptide (Lys-Gly) (interchain with G-Cter in SUMO2)). 77-84 (GQPGTGKT) serves as a coordination point for ATP. Residue Ser437 is modified to Phosphoserine. Glycyl lysine isopeptide (Lys-Gly) (interchain with G-Cter in SUMO2) cross-links involve residues Lys444 and Lys456.

It belongs to the RuvB family. As to quaternary structure, forms homohexameric rings. Can form a dodecamer with RUVBL1 made of two stacked hexameric rings; however, even though RUVBL1 and RUVBL2 are present in equimolar ratio, the oligomeric status of each hexamer is not known. Oligomerization may regulate binding to nucleic acids and conversely, binding to nucleic acids may affect the dodecameric assembly. Interaction of the complex with DHX34 results in conformational changes of the N-terminus of the RUVBL2 subunits, resulting in loss of nucleotide binding ability and ATP hydrolysis of the complex. Interacts with the transcriptional activation domain of MYC. Interacts with ATF2. Component of the RNA polymerase II holoenzyme complex. May also act to bridge the LEF1/TCF1-CTNNB1 complex and TBP. Component of the NuA4 histone acetyltransferase complex which contains the catalytic subunit KAT5/TIP60 and the subunits EP400, TRRAP/PAF400, BRD8/SMAP, EPC1, DMAP1/DNMAP1, RUVBL1/TIP49, RUVBL2, ING3, actin, ACTL6A/BAF53A, MORF4L1/MRG15, MORF4L2/MRGX, MRGBP, YEATS4/GAS41, VPS72/YL1 and MEAF6. The NuA4 complex interacts with MYC and the adenovirus E1A protein. RUVBL2 interacts with EP400. Component of a NuA4-related complex which contains EP400, TRRAP/PAF400, SRCAP, BRD8/SMAP, EPC1, DMAP1/DNMAP1, RUVBL1/TIP49, RUVBL2, actin, ACTL6A/BAF53A, VPS72 and YEATS4/GAS41. Interacts with NPAT. Component of the chromatin-remodeling INO80 complex; specifically part of a complex module associated with the helicase ATP-binding and the helicase C-terminal domain of INO80. Component of some MLL1/MLL complex, at least composed of the core components KMT2A/MLL1, ASH2L, HCFC1/HCF1, WDR5 and RBBP5, as well as the facultative components BACC1, CHD8, E2F6, HSP70, INO80C, KANSL1, LAS1L, MAX, MCRS1, MGA, MYST1/MOF, PELP1, PHF20, PRP31, RING2, RUVB1/TIP49A, RUVB2/TIP49B, SENP3, TAF1, TAF4, TAF6, TAF7, TAF9 and TEX10. Interacts with IGHMBP2. Interacts with TELO2. Interacts with HINT1. Component of a SWR1-like complex. Component of the R2TP complex composed at least of RUVBL1, RUVBL2, RPAP3 and PIHD1. Component of the PAQosome complex which is responsible for the biogenesis of several protein complexes and which consists of R2TP complex members RUVBL1, RUVBL2, RPAP3 and PIH1D1, URI complex members PFDN2, PFDN6, PDRG1, UXT and URI1 as well as ASDURF, POLR2E and DNAAF10/WDR92. Interacts with ITFG1. Interacts with ZMYND10. Interacts with WAC; WAC positively regulates MTOR activity by promoting the assembly of the TTT complex composed of TELO2, TTI1 and TTI2 and the RUVBL complex composed of RUVBL1 and RUVBL2 into the TTT-RUVBL complex which leads to the dimerization of the mTORC1 complex and its subsequent activation. Forms a complex with APPL1 and APPL2. Interacts with ZNHIT2 (via HIT-type zinc finger) in the presence of ATP or ADP; shows a stronger interaction in the presence of ADP. The RUVBL1/RUVBL2 complex interacts with ZNHIT1 (via HIT-type zinc finger), ZNHIT3 (via HIT-type zinc finger), ZNHIT6 (via HIT-type zinc finger) and DDX59/ZNHIT5 (via HIT-type zinc finger) in the presence of ADP. Interacts with NOPCHAP1; the interaction is direct and disrupted upon ATP binding. Interacts with SMG1. In terms of assembly, (Microbial infection) Interacts with Mumps L polymerase; this interaction regulates the viral transcription. Ubiquitously expressed. Highly expressed in testis and thymus.

The protein localises to the nucleus matrix. The protein resides in the nucleus. It is found in the nucleoplasm. It localises to the cytoplasm. Its subcellular location is the membrane. The protein localises to the dynein axonemal particle. It catalyses the reaction ATP + H2O = ADP + phosphate + H(+). Its function is as follows. Possesses single-stranded DNA-stimulated ATPase and ATP-dependent DNA helicase (5' to 3') activity; hexamerization is thought to be critical for ATP hydrolysis and adjacent subunits in the ring-like structure contribute to the ATPase activity. Component of the NuA4 histone acetyltransferase complex which is involved in transcriptional activation of select genes principally by acetylation of nucleosomal histones H4 and H2A. This modification may both alter nucleosome -DNA interactions and promote interaction of the modified histones with other proteins which positively regulate transcription. This complex may be required for the activation of transcriptional programs associated with oncogene and proto-oncogene mediated growth induction, tumor suppressor mediated growth arrest and replicative senescence, apoptosis, and DNA repair. The NuA4 complex ATPase and helicase activities seem to be, at least in part, contributed by the association of RUVBL1 and RUVBL2 with EP400. NuA4 may also play a direct role in DNA repair when recruited to sites of DNA damage. Component of a SWR1-like complex that specifically mediates the removal of histone H2A.Z/H2AZ1 from the nucleosome. Proposed core component of the chromatin remodeling INO80 complex which exhibits DNA- and nucleosome-activated ATPase activity and catalyzes ATP-dependent nucleosome sliding. Plays an essential role in oncogenic transformation by MYC and also modulates transcriptional activation by the LEF1/TCF1-CTNNB1 complex. May also inhibit the transcriptional activity of ATF2. Involved in the endoplasmic reticulum (ER)-associated degradation (ERAD) pathway where it negatively regulates expression of ER stress response genes. May play a role in regulating the composition of the U5 snRNP complex. The sequence is that of RuvB-like 2 (RUVBL2) from Homo sapiens (Human).